The primary structure comprises 3164 residues: Large tegument protein deneddylase (3164 aa).

A deubiquitination activity region spans residues 1–273 (MGGGNNTNPG…SETYLQDEAF (273 aa)). Positions 45–263 (VVTGARNQFA…TAAALHLYGA (219 aa)) constitute a Peptidase C76 domain. Catalysis depends on residues cysteine 65, aspartate 197, and histidine 199. Residues 289–508 (AGLGEPCVGV…GEDDGPTVPA (220 aa)) are disordered. A compositionally biased stretch (pro residues) spans 308-321 (GPHPPTAAQSPPPT). Residues 343–353 (PEAKRPNRAPD) are compositionally biased toward basic and acidic residues. The span at 365-390 (PTDPPSADPPSADPPSAIPPPPPSAP) shows a compositional bias: pro residues. The segment covering 416 to 432 (GRHRARYSAGLPKRRRP) has biased composition (basic residues). The nuclear localization signal stretch occupies residues 426-432 (LPKRRRP). An interaction with inner tegument protein region spans residues 579 to 609 (LELCVIFFFERVLAFLIENGARTHTQAGVAG). Residues 579-609 (LELCVIFFFERVLAFLIENGARTHTQAGVAG) are interaction with UL37. Disordered regions lie at residues 2296–2318 (QTLS…LYRP), 2518–2552 (HPVY…LGPG), and 2583–3020 (ASDD…SLSG). Over residues 2653–2667 (QSSPAPPDATAPRPP) the composition is skewed to pro residues. Residues 2668–2680 (ASSRASAASSSGS) show a composition bias toward low complexity. The segment covering 2681 to 2690 (RARRHRRARS) has biased composition (basic residues). Positions 2722–2732 (PPAPPKPPEPA) are enriched in pro residues. A compositionally biased stretch (low complexity) spans 2834–2843 (PAEPTSSSPA). Pro residues predominate over residues 2844–2866 (GPSPPPPAVQPVAPPPTSGPPPT). The span at 2886 to 2897 (TRQPVATPTTSA) shows a compositional bias: polar residues. 35 repeat units span residues 2911–2912 (PQ), 2913–2914 (PQ), 2915–2916 (PQ), 2917–2918 (PQ), 2919–2920 (PQ), 2921–2922 (PQ), 2923–2924 (PQ), 2925–2926 (PQ), 2927–2928 (PQ), 2929–2930 (PQ), 2931–2932 (PQ), 2933–2934 (PQ), 2935–2936 (PQ), 2937–2938 (PQ), 2939–2940 (PQ), 2941–2942 (PQ), 2943–2944 (PQ), 2945–2946 (PQ), 2947–2948 (PQ), 2949–2950 (PQ), 2951–2952 (PQ), 2953–2954 (PQ), 2955–2956 (PQ), 2957–2958 (PQ), 2959–2960 (PQ), 2961–2962 (PQ), 2963–2964 (PQ), 2965–2966 (PQ), 2967–2968 (PQ), 2969–2970 (PQ), 2971–2972 (PQ), 2973–2974 (PQ), 2975–2976 (PQ), 2977–2978 (PQ), and 2979–2980 (PQ). The 35 X 2 AA tandem repeats of P-Q stretch occupies residues 2911 to 2980 (PQPQPQPQPQ…PQPQPQPQPQ (70 aa)). Residues 2912-2978 (QPQPQPQPQP…PQPQPQPQPQ (67 aa)) show a composition bias toward pro residues. A compositionally biased stretch (polar residues) spans 2999 to 3014 (NRPSVPASASSTNPRT).

The protein belongs to the herpesviridae large tegument protein family. Interacts with host CUL1 and CUL4A; these interactions inhibit the E3 ligase activity of cullins. Interacts with inner tegument protein. Interacts with capsid vertex specific component CVC2. Interacts with the major capsid protein/MCP. Interacts with VP16; this interaction is important for outer tegument association to the capsid. May form homodimers. Proteolytically processed, possibly into several polypeptides. Enzymatic activity is only detectable following cleavage of the UL36 protein, which occurs late during viral replication.

It is found in the virion tegument. The protein resides in the host cytoplasm. Its subcellular location is the host nucleus. The enzyme catalyses Thiol-dependent hydrolysis of ester, thioester, amide, peptide and isopeptide bonds formed by the C-terminal Gly of ubiquitin (a 76-residue protein attached to proteins as an intracellular targeting signal).. Functionally, large tegument protein that plays multiple roles in the viral cycle. During viral entry, remains associated with the capsid while most of the tegument is detached and participates in the capsid transport toward the host nucleus. Plays a role in the routing of the capsid at the nuclear pore complex and subsequent uncoating. Within the host nucleus, acts as a deneddylase and promotes the degradation of nuclear CRLs (cullin-RING ubiquitin ligases) and thereby stabilizes nuclear CRL substrates, while cytoplasmic CRLs remain unaffected. These modifications prevent host cell cycle S-phase progression and create a favorable environment allowing efficient viral genome replication. Participates later in the secondary envelopment of capsids. Indeed, plays a linker role for the association of the outer viral tegument to the capsids together with the inner tegument protein. The chain is Large tegument protein deneddylase from Human herpesvirus 1 (strain 17) (HHV-1).